Reading from the N-terminus, the 317-residue chain is Transaldolase (317 aa).

The active-site Schiff-base intermediate with substrate is Lys-126.

It belongs to the transaldolase family. Type 1 subfamily. As to quaternary structure, homodimer.

It is found in the cytoplasm. It catalyses the reaction D-sedoheptulose 7-phosphate + D-glyceraldehyde 3-phosphate = D-erythrose 4-phosphate + beta-D-fructose 6-phosphate. It functions in the pathway carbohydrate degradation; pentose phosphate pathway; D-glyceraldehyde 3-phosphate and beta-D-fructose 6-phosphate from D-ribose 5-phosphate and D-xylulose 5-phosphate (non-oxidative stage): step 2/3. Transaldolase is important for the balance of metabolites in the pentose-phosphate pathway. This Burkholderia cenocepacia (strain ATCC BAA-245 / DSM 16553 / LMG 16656 / NCTC 13227 / J2315 / CF5610) (Burkholderia cepacia (strain J2315)) protein is Transaldolase.